The primary structure comprises 388 residues: Succinate--CoA ligase [ADP-forming] subunit beta (388 aa).

The region spanning 9–244 (KQLFARYGLP…PSQEDSREAH (236 aa)) is the ATP-grasp domain. ATP is bound by residues lysine 46, 53–55 (GRG), glutamate 99, threonine 102, and glutamate 107. Positions 199 and 213 each coordinate Mg(2+). Substrate contacts are provided by residues asparagine 264 and 321–323 (GIV).

This sequence belongs to the succinate/malate CoA ligase beta subunit family. In terms of assembly, heterotetramer of two alpha and two beta subunits. Mg(2+) serves as cofactor.

The enzyme catalyses succinate + ATP + CoA = succinyl-CoA + ADP + phosphate. It catalyses the reaction GTP + succinate + CoA = succinyl-CoA + GDP + phosphate. It participates in carbohydrate metabolism; tricarboxylic acid cycle; succinate from succinyl-CoA (ligase route): step 1/1. Succinyl-CoA synthetase functions in the citric acid cycle (TCA), coupling the hydrolysis of succinyl-CoA to the synthesis of either ATP or GTP and thus represents the only step of substrate-level phosphorylation in the TCA. The beta subunit provides nucleotide specificity of the enzyme and binds the substrate succinate, while the binding sites for coenzyme A and phosphate are found in the alpha subunit. The protein is Succinate--CoA ligase [ADP-forming] subunit beta of Pectobacterium atrosepticum (strain SCRI 1043 / ATCC BAA-672) (Erwinia carotovora subsp. atroseptica).